The sequence spans 203 residues: NAD(P)H dehydrogenase (quinone) (203 aa).

Residues 7–194 (VLVLYHSSYG…SLARKQGAHV (188 aa)) form the Flavodoxin-like domain. FMN contacts are provided by residues 13–18 (SSYGHI) and 82–84 (TRF). Residue tyrosine 15 coordinates NAD(+). Tryptophan 102 lines the substrate pocket. Residues 117 to 122 (STGTGG) and histidine 137 each bind FMN.

This sequence belongs to the WrbA family. FMN is required as a cofactor.

It catalyses the reaction a quinone + NADH + H(+) = a quinol + NAD(+). It carries out the reaction a quinone + NADPH + H(+) = a quinol + NADP(+). The sequence is that of NAD(P)H dehydrogenase (quinone) from Parvibaculum lavamentivorans (strain DS-1 / DSM 13023 / NCIMB 13966).